The chain runs to 173 residues: Crossover junction endodeoxyribonuclease RuvC (173 aa).

Residues Asp-8, Glu-69, and Asp-141 contribute to the active site. Positions 8, 69, and 141 each coordinate Mg(2+).

It belongs to the RuvC family. Homodimer which binds Holliday junction (HJ) DNA. The HJ becomes 2-fold symmetrical on binding to RuvC with unstacked arms; it has a different conformation from HJ DNA in complex with RuvA. In the full resolvosome a probable DNA-RuvA(4)-RuvB(12)-RuvC(2) complex forms which resolves the HJ. Requires Mg(2+) as cofactor.

The protein resides in the cytoplasm. It carries out the reaction Endonucleolytic cleavage at a junction such as a reciprocal single-stranded crossover between two homologous DNA duplexes (Holliday junction).. The RuvA-RuvB-RuvC complex processes Holliday junction (HJ) DNA during genetic recombination and DNA repair. Endonuclease that resolves HJ intermediates. Cleaves cruciform DNA by making single-stranded nicks across the HJ at symmetrical positions within the homologous arms, yielding a 5'-phosphate and a 3'-hydroxyl group; requires a central core of homology in the junction. The consensus cleavage sequence is 5'-(A/T)TT(C/G)-3'. Cleavage occurs on the 3'-side of the TT dinucleotide at the point of strand exchange. HJ branch migration catalyzed by RuvA-RuvB allows RuvC to scan DNA until it finds its consensus sequence, where it cleaves and resolves the cruciform DNA. The polypeptide is Crossover junction endodeoxyribonuclease RuvC (Stenotrophomonas maltophilia (strain R551-3)).